A 406-amino-acid chain; its full sequence is Peptidase T (406 aa).

A Zn(2+)-binding site is contributed by His78. Asp80 is an active-site residue. Asp139 contributes to the Zn(2+) binding site. Glu173 functions as the Proton acceptor in the catalytic mechanism. Glu174, Asp196, and His378 together coordinate Zn(2+).

It belongs to the peptidase M20B family. Requires Zn(2+) as cofactor.

The protein resides in the cytoplasm. The enzyme catalyses Release of the N-terminal residue from a tripeptide.. Cleaves the N-terminal amino acid of tripeptides. This chain is Peptidase T, found in Clostridium perfringens (strain ATCC 13124 / DSM 756 / JCM 1290 / NCIMB 6125 / NCTC 8237 / Type A).